We begin with the raw amino-acid sequence, 417 residues long: Autophagy-related protein 18 (417 aa).

WD repeat units lie at residues 1–36 (MSMN…KSYE), 76–114 (ELTF…LVYT), 185–225 (AHKS…KLYQ), and 230–269 (SMPS…GLSK). The L/FRRG motif signature appears at 226-230 (FRRGS). The segment at 267-300 (LSKTSSPSRKLESSRGSGDESAVESASSEMSSRK) is disordered. A compositionally biased stretch (low complexity) spans 285-296 (DESAVESASSEM). 2 WD repeats span residues 300 to 346 (KHNG…AWIK) and 355 to 395 (GGSG…GGEG).

It belongs to the WD repeat PROPPIN family. Component of the PI(3,5)P2 regulatory complex.

It localises to the preautophagosomal structure membrane. The protein resides in the vacuole membrane. Its subcellular location is the endosome membrane. Its function is as follows. The PI(3,5)P2 regulatory complex regulates both the synthesis and turnover of phosphatidylinositol 3,5-bisphosphate (PtdIns(3,5)P2). Necessary for proper vacuole morphology. Plays an important role in osmotically-induced vacuole fragmentation. Required for cytoplasm to vacuole transport (Cvt) vesicle formation, pexophagy and starvation-induced autophagy. Involved in correct ATG9 trafficking to the pre-autophagosomal structure. Might also be involved in premeiotic DNA replication. The sequence is that of Autophagy-related protein 18 (ATG18) from Coccidioides immitis (strain RS) (Valley fever fungus).